Consider the following 355-residue polypeptide: uncharacterized protein (355 aa).

This sequence belongs to the ycf89 family.

Its subcellular location is the plastid. It is found in the chloroplast. This is an uncharacterized protein from Trieres chinensis (Marine centric diatom).